A 560-amino-acid chain; its full sequence is Dihydroxy-acid dehydratase (560 aa).

Position 80 (Asp-80) interacts with Mg(2+). Residue Cys-121 coordinates [2Fe-2S] cluster. Residues Asp-122 and Lys-123 each coordinate Mg(2+). Lys-123 is modified (N6-carboxylysine). Cys-194 serves as a coordination point for [2Fe-2S] cluster. Residue Glu-447 participates in Mg(2+) binding. Ser-473 serves as the catalytic Proton acceptor.

It belongs to the IlvD/Edd family. Homodimer. It depends on [2Fe-2S] cluster as a cofactor. The cofactor is Mg(2+).

The catalysed reaction is (2R)-2,3-dihydroxy-3-methylbutanoate = 3-methyl-2-oxobutanoate + H2O. It carries out the reaction (2R,3R)-2,3-dihydroxy-3-methylpentanoate = (S)-3-methyl-2-oxopentanoate + H2O. It participates in amino-acid biosynthesis; L-isoleucine biosynthesis; L-isoleucine from 2-oxobutanoate: step 3/4. Its pathway is amino-acid biosynthesis; L-valine biosynthesis; L-valine from pyruvate: step 3/4. In terms of biological role, functions in the biosynthesis of branched-chain amino acids. Catalyzes the dehydration of (2R,3R)-2,3-dihydroxy-3-methylpentanoate (2,3-dihydroxy-3-methylvalerate) into 2-oxo-3-methylpentanoate (2-oxo-3-methylvalerate) and of (2R)-2,3-dihydroxy-3-methylbutanoate (2,3-dihydroxyisovalerate) into 2-oxo-3-methylbutanoate (2-oxoisovalerate), the penultimate precursor to L-isoleucine and L-valine, respectively. In Chlorobaculum parvum (strain DSM 263 / NCIMB 8327) (Chlorobium vibrioforme subsp. thiosulfatophilum), this protein is Dihydroxy-acid dehydratase.